A 264-amino-acid polypeptide reads, in one-letter code: Apolipoprotein A-I (264 aa).

Positions 1-18 (MKAVVLAVAVLFLTGSQA) are cleaved as a signal peptide. 2 consecutive repeat copies span residues 67-88 (LNLL…EQLG) and 89-110 (HVSQ…EEMN). The interval 67 to 264 (LNLLENWDTL…DQITKHVTTQ (198 aa)) is 10 X approximate tandem repeats. Residue M109 is modified to Methionine sulfoxide. A 3; half-length repeat occupies 111 to 121 (KDLEKVKKKVQ). 3 tandem repeats follow at residues 122-143 (PFLD…HKVE), 144-165 (PLSL…EKLG), and 166-187 (PLGK…SHLR). The stretch at 188–207 (TYTEEMGQILAERLGAIKES) is one 7; truncated repeat. M193 is modified (methionine sulfoxide). The stretch at 208-229 (TSLAEYQTKASEHLRTFSKKAK) is repeat 8. The 9; half-length repeat unit spans residues 230–240 (PILEDLRQGLL). Copy 10 of the repeat occupies 241 to 264 (PVAENFKTNIKNTFDQITKHVTTQ).

This sequence belongs to the apolipoprotein A1/A4/E family. In terms of assembly, homodimer. Interacts with APOA1BP and CLU. Component of a sperm activating protein complex (SPAP), consisting of APOA1, an immunoglobulin heavy chain, an immunoglobulin light chain and albumin. Interacts with NDRG1. Interacts with SCGB3A2. Interacts with NAXE and YJEFN3. In terms of processing, glycosylated. Post-translationally, palmitoylated. Phosphorylation sites are present in the extracellular medium.

Its subcellular location is the secreted. In terms of biological role, participates in the reverse transport of cholesterol from tissues to the liver for excretion by promoting cholesterol efflux from tissues and by acting as a cofactor for the lecithin cholesterol acyltransferase (LCAT). As part of the SPAP complex, activates spermatozoa motility. This is Apolipoprotein A-I (Apoa1) from Fukomys damarensis (Damaraland mole rat).